The following is a 347-amino-acid chain: Ribosomal RNA small subunit methyltransferase C (347 aa).

Belongs to the methyltransferase superfamily. RsmC family. Monomer.

It localises to the cytoplasm. The catalysed reaction is guanosine(1207) in 16S rRNA + S-adenosyl-L-methionine = N(2)-methylguanosine(1207) in 16S rRNA + S-adenosyl-L-homocysteine + H(+). Its function is as follows. Specifically methylates the guanine in position 1207 of 16S rRNA in the 30S particle. This is Ribosomal RNA small subunit methyltransferase C from Shewanella baltica (strain OS155 / ATCC BAA-1091).